A 1040-amino-acid polypeptide reads, in one-letter code: Multidrug resistance protein MdtB (1040 aa).

Transmembrane regions (helical) follow at residues 16 to 36 (FIMR…AGII), 347 to 367 (LMMA…NIPA), 369 to 389 (IIPG…MVFL), 396 to 416 (LTLM…IVVI), 440 to 460 (IGFT…PLLF), 472 to 492 (FAIT…TLTP), 537 to 557 (WLTL…WVFI), 863 to 883 (LGST…VLGI), 888 to 908 (FIHP…ALLA), 911 to 931 (IAGS…IGIV), 968 to 988 (ILMT…STGV), and 998 to 1018 (IGMV…TPVI).

The protein belongs to the resistance-nodulation-cell division (RND) (TC 2.A.6) family. MdtB subfamily. Part of a tripartite efflux system composed of MdtA, MdtB and MdtC. MdtB forms a heteromultimer with MdtC.

It is found in the cell inner membrane. The MdtABC tripartite complex confers resistance against novobiocin and deoxycholate. This chain is Multidrug resistance protein MdtB, found in Escherichia fergusonii (strain ATCC 35469 / DSM 13698 / CCUG 18766 / IAM 14443 / JCM 21226 / LMG 7866 / NBRC 102419 / NCTC 12128 / CDC 0568-73).